Here is a 243-residue protein sequence, read N- to C-terminus: Carboxy-S-adenosyl-L-methionine synthase (243 aa).

S-adenosyl-L-methionine-binding positions include tyrosine 39, 64-66 (GCS), 89-90 (DN), 117-118 (DL), asparagine 132, and arginine 199.

It belongs to the class I-like SAM-binding methyltransferase superfamily. Cx-SAM synthase family. In terms of assembly, homodimer.

It carries out the reaction prephenate + S-adenosyl-L-methionine = carboxy-S-adenosyl-L-methionine + 3-phenylpyruvate + H2O. Catalyzes the conversion of S-adenosyl-L-methionine (SAM) to carboxy-S-adenosyl-L-methionine (Cx-SAM). The polypeptide is Carboxy-S-adenosyl-L-methionine synthase (Pseudoalteromonas atlantica (strain T6c / ATCC BAA-1087)).